A 285-amino-acid polypeptide reads, in one-letter code: Acetylglutamate kinase (285 aa).

Residues 63–64 (GG), R85, and N178 contribute to the substrate site.

This sequence belongs to the acetylglutamate kinase family. ArgB subfamily.

It is found in the cytoplasm. The catalysed reaction is N-acetyl-L-glutamate + ATP = N-acetyl-L-glutamyl 5-phosphate + ADP. It functions in the pathway amino-acid biosynthesis; L-arginine biosynthesis; N(2)-acetyl-L-ornithine from L-glutamate: step 2/4. Its function is as follows. Catalyzes the ATP-dependent phosphorylation of N-acetyl-L-glutamate. This chain is Acetylglutamate kinase, found in Synechococcus sp. (strain CC9311).